Consider the following 352-residue polypeptide: Glycerol-1-phosphate dehydrogenase [NAD(P)+] (352 aa).

NAD(+) contacts are provided by residues 98–102 (GKAID) and 120–123 (TAAS). Aspartate 125 contributes to the substrate binding site. Serine 129 contributes to the NAD(+) binding site. Aspartate 172 provides a ligand contact to substrate. Aspartate 172 and histidine 252 together coordinate Zn(2+). Histidine 256 provides a ligand contact to substrate. Histidine 268 contacts Zn(2+).

This sequence belongs to the glycerol-1-phosphate dehydrogenase family. Zn(2+) is required as a cofactor.

The protein resides in the cytoplasm. The catalysed reaction is sn-glycerol 1-phosphate + NAD(+) = dihydroxyacetone phosphate + NADH + H(+). The enzyme catalyses sn-glycerol 1-phosphate + NADP(+) = dihydroxyacetone phosphate + NADPH + H(+). It participates in membrane lipid metabolism; glycerophospholipid metabolism. Functionally, catalyzes the NAD(P)H-dependent reduction of dihydroxyacetonephosphate (DHAP or glycerone phosphate) to glycerol 1-phosphate (G1P). The G1P thus generated is used as the glycerophosphate backbone of phospholipids in the cellular membranes of Archaea. The sequence is that of Glycerol-1-phosphate dehydrogenase [NAD(P)+] from Haloarcula marismortui (strain ATCC 43049 / DSM 3752 / JCM 8966 / VKM B-1809) (Halobacterium marismortui).